We begin with the raw amino-acid sequence, 379 residues long: Spermatogenesis-associated protein 17 (379 aa).

IQ domains follow at residues Glu48–Ile77, Leu71–Tyr100, and Tyr107–Tyr136.

As to expression, strongly expressed in adult testis but weakly expressed in the spleen and thymus. Strongly expressed in round and elongating spermatids, and weakly or not expressed in spermatozoa.

Its subcellular location is the cytoplasm. The protein is Spermatogenesis-associated protein 17 (Spata17) of Mus musculus (Mouse).